The following is a 580-amino-acid chain: 2-succinyl-5-enolpyruvyl-6-hydroxy-3-cyclohexene-1-carboxylate synthase (580 aa).

The protein belongs to the TPP enzyme family. MenD subfamily. Homodimer. Requires Mg(2+) as cofactor. It depends on Mn(2+) as a cofactor. The cofactor is thiamine diphosphate.

It catalyses the reaction isochorismate + 2-oxoglutarate + H(+) = 5-enolpyruvoyl-6-hydroxy-2-succinyl-cyclohex-3-ene-1-carboxylate + CO2. The protein operates within quinol/quinone metabolism; 1,4-dihydroxy-2-naphthoate biosynthesis; 1,4-dihydroxy-2-naphthoate from chorismate: step 2/7. Its pathway is quinol/quinone metabolism; menaquinone biosynthesis. Its function is as follows. Catalyzes the thiamine diphosphate-dependent decarboxylation of 2-oxoglutarate and the subsequent addition of the resulting succinic semialdehyde-thiamine pyrophosphate anion to isochorismate to yield 2-succinyl-5-enolpyruvyl-6-hydroxy-3-cyclohexene-1-carboxylate (SEPHCHC). The sequence is that of 2-succinyl-5-enolpyruvyl-6-hydroxy-3-cyclohexene-1-carboxylate synthase from Listeria monocytogenes serovar 1/2a (strain ATCC BAA-679 / EGD-e).